We begin with the raw amino-acid sequence, 141 residues long: Large ribosomal subunit protein uL11 (141 aa).

The protein belongs to the universal ribosomal protein uL11 family. Part of the ribosomal stalk of the 50S ribosomal subunit. Interacts with L10 and the large rRNA to form the base of the stalk. L10 forms an elongated spine to which L12 dimers bind in a sequential fashion forming a multimeric L10(L12)X complex. Post-translationally, one or more lysine residues are methylated.

Its function is as follows. Forms part of the ribosomal stalk which helps the ribosome interact with GTP-bound translation factors. In Synechococcus sp. (strain CC9311), this protein is Large ribosomal subunit protein uL11.